A 901-amino-acid polypeptide reads, in one-letter code: MLIKLLTKVFGSRNDRTLRRMRKAVSLINAMEPEMEKLSDDELKAKTNEFRARIEKGESVESLIPEAFAVVREASKRVFGMRHFDVQLLGGMVLNDRCIAEMRTGEGKTLTATLPAYLNALSGKGVHVVTVNDYLAQRDAENNRPLFEFLGMSVGINLPGMPAPAKREAYAADITYGTNNEYGFDYLRDNMAFSPEERVQRKLHYALVDEVDSILIDEARTPLIISGPAEDSSEMYKKVNKIIPHLIRQEKEDSDTFQGEGHFSVDEKARQVNLTERGLVLIEELLVQEGIMDEGESLYSPGNIMLMHHVTAALRAHALFTRDVDYIVKDGEVIIVDEHTGRTMQGRRWSDGLHQAVEAKEGVEIQNENQTLASITFQNYFRLYEKLAGMTGTADTEAFEFSSIYKLDTVVVPTNRPMIRKDLPDLVYMTEAEKIQAIIEDIKERTANGQPVLVGTISIEKSEVVSRELTKAGIKHNVLNAKFHANEAGIVAQAGYPAAVTIATNMAGRGTDIMLGGSWQAEVAALEAPTEEQIAQIKADWQVRHDAVLAAGGLHIIGTERHESRRIDNQLRGRSGRQGDPGSSRFYLSMEDALMRIFASDRVSGMMRKLGMKPGEAIEHPWVTKAIANAQRKVESRNFDIRKQLLEYDDVANDQRRAIYTQRNELLDVSDVSDTINSIREDVFKATIDAYIPPQSLEEMWDIPGLQERLKNDFDLEMPIAEWLDKEPELHEETLRERILAQSIEVYQRKEEVVGAEMMRHFEKGVMLQTLDSLWKEHLAAMDYLRQGIHLRGYAQKDPKQEYKRESFAMFAAMLESLKYEVISTLSKVQVRMPEEVEAMEMQRREEAERLAQMQQLSHQDDDAAVAADLAAQTGERKIGRNDPCPCGSGKKYKQCHGRLS.

ATP-binding positions include glutamine 87, 105 to 109, and aspartate 512; that span reads GEGKT. 4 residues coordinate Zn(2+): cysteine 885, cysteine 887, cysteine 896, and histidine 897.

The protein belongs to the SecA family. As to quaternary structure, monomer and homodimer. Part of the essential Sec protein translocation apparatus which comprises SecA, SecYEG and auxiliary proteins SecDF-YajC and YidC. It depends on Zn(2+) as a cofactor.

The protein resides in the cell inner membrane. It localises to the cytoplasm. It carries out the reaction ATP + H2O + cellular proteinSide 1 = ADP + phosphate + cellular proteinSide 2.. In terms of biological role, part of the Sec protein translocase complex. Interacts with the SecYEG preprotein conducting channel. Has a central role in coupling the hydrolysis of ATP to the transfer of proteins into and across the cell membrane, serving both as a receptor for the preprotein-SecB complex and as an ATP-driven molecular motor driving the stepwise translocation of polypeptide chains across the membrane. This Salmonella agona (strain SL483) protein is Protein translocase subunit SecA.